Consider the following 153-residue polypeptide: SsrA-binding protein (153 aa).

This sequence belongs to the SmpB family.

It localises to the cytoplasm. Its function is as follows. Required for rescue of stalled ribosomes mediated by trans-translation. Binds to transfer-messenger RNA (tmRNA), required for stable association of tmRNA with ribosomes. tmRNA and SmpB together mimic tRNA shape, replacing the anticodon stem-loop with SmpB. tmRNA is encoded by the ssrA gene; the 2 termini fold to resemble tRNA(Ala) and it encodes a 'tag peptide', a short internal open reading frame. During trans-translation Ala-aminoacylated tmRNA acts like a tRNA, entering the A-site of stalled ribosomes, displacing the stalled mRNA. The ribosome then switches to translate the ORF on the tmRNA; the nascent peptide is terminated with the 'tag peptide' encoded by the tmRNA and targeted for degradation. The ribosome is freed to recommence translation, which seems to be the essential function of trans-translation. In Pelotomaculum thermopropionicum (strain DSM 13744 / JCM 10971 / SI), this protein is SsrA-binding protein.